We begin with the raw amino-acid sequence, 575 residues long: Intermediate filament protein ifa-1 (575 aa).

Disordered regions lie at residues 1 to 30 and 45 to 72; these read MMEI…TGNV and SGAG…EKKE. The tract at residues 1–72 is head; sequence MMEITRETMS…RDSREREKKE (72 aa). Over residues 7–17 the composition is skewed to polar residues; the sequence is ETMSFTSTTPS. Positions 63 to 72 are enriched in basic and acidic residues; sequence RDSREREKKE. The region spanning 69-422 is the IF rod domain; sequence EKKEMSDLND…KMLEGEENRA (354 aa). The tract at residues 73–104 is coil 1A; that stretch reads MSDLNDRLASYIEKVRFLEAQNRKLAADLDAL. The linker 1 stretch occupies residues 105-118; that stretch reads RSKWGKDTHNIRNM. The tract at residues 119–256 is coil 1B; that stretch reads YEGELVDAQK…RVHDNEIKEL (138 aa). Residues 257–274 are linker 12; sequence QTLASRDTTPENREFFKN. A coil 2 region spans residues 275 to 422; it reads ELSSAIRDIR…KMLEGEENRA (148 aa). Positions 423–572 are tail; it reads GLKQLVEQVV…EERATHIQRQ (150 aa). The LTD domain maps to 455-572; the sequence is SRQSFQRSAK…EERATHIQRQ (118 aa).

Belongs to the intermediate filament family. As to quaternary structure, forms some heteromeric filaments with ifb-1. Isoform d is abundantly expressed in the marginal cells of the pharynx, forming apicobasally oriented thick filament bundles that are attached to the apical and basal plasma membrane by hemi-adherens junctions. Expression of isoform c is also seen in the excretory cells and in the uterus. Isoform c is detectable in the amphid sensory neurins and the pharyngeal-intestinal valve. Both isoform c and isoform d are expressed in the rectum and vulva and in some neurons of the tail. In larvae, expression is seen in the excretory cell, the vulva, the rectum and in the thick filament bundles of the pharynx. Expression in pharynx begins in late embryos.

The protein localises to the cytoplasm. Functionally, cytoplasmic intermediate filaments make up the structural component of the cytoskeleton providing mechanical strength to cells. Essential protein required during embryogenesis especially for survival past the L1 larva stage, involved in intestine morphogenesis. The polypeptide is Intermediate filament protein ifa-1 (ifa-1) (Caenorhabditis elegans).